We begin with the raw amino-acid sequence, 2255 residues long: Non-reducing polyketide synthase nvfA (2255 aa).

Residues 13 to 251 (ILFGPQSSDM…HHPDHTAAVE (239 aa)) are N-terminal acylcarrier protein transacylase domain (SAT). The region spanning 365 to 781 (VRPIAVTGMA…GSNAAIVLRQ (417 aa)) is the Ketosynthase family 3 (KS3) domain. Catalysis depends on for beta-ketoacyl synthase activity residues Cys-530, His-665, and His-704. A malonyl-CoA:ACP transacylase (MAT) domain region spans residues 887–1187 (LCFGGQNGNT…QASDLKSPQA (301 aa)). Ser-974 serves as the catalytic For acyl/malonyl transferase activity. The interval 1229–1357 (EPMGLVQVLE…GRISLHPFDS (129 aa)) is N-terminal hotdog fold. A PKS/mFAS DH domain is found at 1229–1536 (EPMGLVQVLE…FTSVSIRALT (308 aa)). A product template (PT) domain region spans residues 1232 to 1535 (GLVQVLEKRP…TFTSVSIRAL (304 aa)). The Proton acceptor; for dehydratase activity role is filled by His-1262. The interval 1385-1536 (SSSGLKGSAV…FTSVSIRALT (152 aa)) is C-terminal hotdog fold. The Proton donor; for dehydratase activity role is filled by Asp-1443. A Carrier domain is found at 1581 to 1655 (TNKFPAIQAM…CLVQAIFPGA (75 aa)). Ser-1615 carries the O-(pantetheine 4'-phosphoryl)serine modification. The interval 1809 to 2042 (HHASEHTLLR…GYNWVNWSCN (234 aa)) is methyltransferase (CMeT) domain. The segment at 2109–2227 (LLIHGGGHVM…ILSFYCPTDY (119 aa)) is thioesterase (TE) domain. Ser-2194 (for thioesterase activity) is an active-site residue.

The catalysed reaction is 3 malonyl-CoA + acetyl-CoA + 2 S-adenosyl-L-methionine = 3,5-dimethylorsellinate + 2 S-adenosyl-L-homocysteine + 3 CO2 + 4 CoA. It functions in the pathway secondary metabolite biosynthesis; terpenoid biosynthesis. Non-reducing polyketide synthase; part of the gene cluster that mediates the biosynthesis of novofumigatonin, a heavily oxygenated meroterpenoid containing a unique orthoester moiety. The first step of the pathway is the synthesis of 3,5-dimethylorsellinic acid (DMOA) by the polyketide synthase nvfA via condensation of one acetyl-CoA starter unit with 3 malonyl-CoA units and 2 methylations. DMOA is then converted to farnesyl-DMOA by the farnesyltransferase nvfB. Epoxydation by FAD-dependent monooxygenase nvfK, followed by a protonation-initiated cyclization catalyzed by the terpene cyclase nvfL leads to the production of asnavolin H. The short chain dehydrogenase nvfC then as a 3-OH dehydrogenase of asnovolin H to yield chemesin D. There are two branches to synthesize asnovolin A from chemesin D. In one branch, chemesin D undergoes Baeyer-Villiger oxidation by nvfH, methylation by nvfJ, and enoyl reduction by the nvfM D enoylreductase that reduces the double bond between C-5'and C-6', to form respectively asnovolin I, asnovolin K, and asnovolin A. In the other branch, the methylation precedes the Baeyer-Villiger oxidation and the enoyl reduction to yield asnovolin A via the asnovolin J intermediate. Asnovolin A is further converted to fumigatonoid A by the Fe(II)/2-oxoglutarate-dependent dioxygenase nvfI that catalyzes an endoperoxidation reaction. The alpha/beta hydrolase nvfD then acts as an epimerase that converts fumigatonoid A to its C-5' epimer, which then undergoes spontaneous or nvfD-catalyzed lactonization. The following step utilizes the ketoreductase nvfG to produce fumigatonoid B. The dioxygenase nvfE further converts fumigatonoid B into fumigatonoid C. Finally the Fe(II)/2-oxoglutarate-dependent dioxygenase nvfF catalyzes two rounds of oxidation to transform fumigatonoid C into the end product, novofumigatonin A. The protein is Non-reducing polyketide synthase nvfA of Aspergillus novofumigatus (strain IBT 16806).